The primary structure comprises 331 residues: Probable mannose-1-phosphate guanylyltransferase 3 (331 aa).

Residue lysine 3 coordinates diphosphate. GDP-alpha-D-mannose-binding residues include glycine 66, asparagine 90, aspartate 92, glycine 127, and asparagine 154.

The protein belongs to the transferase hexapeptide repeat family.

The enzyme catalyses alpha-D-mannose 1-phosphate + GTP + H(+) = GDP-alpha-D-mannose + diphosphate. It participates in nucleotide-sugar biosynthesis; GDP-alpha-D-mannose biosynthesis; GDP-alpha-D-mannose from alpha-D-mannose 1-phosphate (GTP route): step 1/1. Its function is as follows. Catalyzes a reaction of the Smirnoff-Wheeler pathway, the major route to ascorbate biosynthesis in plants. The chain is Probable mannose-1-phosphate guanylyltransferase 3 from Arabidopsis thaliana (Mouse-ear cress).